The chain runs to 180 residues: GTP cyclohydrolase 1 (180 aa).

Zn(2+) is bound by residues cysteine 71, histidine 74, and cysteine 142.

The protein belongs to the GTP cyclohydrolase I family. In terms of assembly, homomer.

The enzyme catalyses GTP + H2O = 7,8-dihydroneopterin 3'-triphosphate + formate + H(+). The protein operates within cofactor biosynthesis; 7,8-dihydroneopterin triphosphate biosynthesis; 7,8-dihydroneopterin triphosphate from GTP: step 1/1. The sequence is that of GTP cyclohydrolase 1 from Helicobacter pylori (strain Shi470).